Reading from the N-terminus, the 133-residue chain is MNKFKLIVTTPERVLISGEVSRVLCKNAVGEFEILAGHQPYLTATVPTVTRIDDENGESKYLFTSTGLMKVQNNEVTFCVNSAEWPEEIDEARAMNAKQRAEERLKNKTDELDKKRAKLALARAMSRLKLKEM.

It belongs to the ATPase epsilon chain family. In terms of assembly, F-type ATPases have 2 components, CF(1) - the catalytic core - and CF(0) - the membrane proton channel. CF(1) has five subunits: alpha(3), beta(3), gamma(1), delta(1), epsilon(1). CF(0) has three main subunits: a, b and c.

Its subcellular location is the cell membrane. In terms of biological role, produces ATP from ADP in the presence of a proton gradient across the membrane. This Clostridium perfringens (strain SM101 / Type A) protein is ATP synthase epsilon chain.